A 77-amino-acid polypeptide reads, in one-letter code: Omega-conotoxin TxVII (77 aa).

The signal sequence occupies residues 1-22; that stretch reads MKLTCMMIVAVLFLTAWTFATA. The propeptide occupies 23–49; the sequence is DDSGNGLENLFPKAHHEMKNPEASKLN. Disulfide bonds link cysteine 52-cysteine 67, cysteine 59-cysteine 71, and cysteine 66-cysteine 75.

As to expression, expressed by the venom duct.

It localises to the secreted. Functionally, omega-conotoxins act at presynaptic membranes, they bind and block voltage-gated calcium channels (Cav). Specifically acts on L-type channels. It blocks molluscan dihydropyridine-sensitive calcium channels. The chain is Omega-conotoxin TxVII from Conus textile (Cloth-of-gold cone).